A 361-amino-acid polypeptide reads, in one-letter code: Gibberellin 20 oxidase 1-D (361 aa).

Residues 199-299 (GNDSIMRLNY…RKSLAFFLCP (101 aa)) form the Fe2OG dioxygenase domain. Fe cation contacts are provided by His-224, Asp-226, and His-280. Arg-290 is an active-site residue.

This sequence belongs to the iron/ascorbate-dependent oxidoreductase family. GA20OX subfamily. The cofactor is Fe cation. It depends on L-ascorbate as a cofactor. As to expression, expressed in nodes and the ear of the elongating stem.

The catalysed reaction is gibberellin A12 + 2 2-oxoglutarate + 3 O2 + H(+) = gibberellin A9 + 2 succinate + 3 CO2 + 2 H2O. The enzyme catalyses gibberellin A53 + 2 2-oxoglutarate + 3 O2 + H(+) = gibberellin A20 + 2 succinate + 3 CO2 + 2 H2O. Functionally, key oxidase enzyme in the biosynthesis of gibberellin that catalyzes the conversion of GA12 and GA53 to GA9 and GA20 respectively, via a three-step oxidation at C-20 of the GA skeleton. This chain is Gibberellin 20 oxidase 1-D (GA20ox1D), found in Triticum aestivum (Wheat).